A 345-amino-acid chain; its full sequence is Ephrin-B1 (345 aa).

Residues 1–24 form the signal peptide; that stretch reads MARPGQRWLSKWLVAMVVLTLCRL. Topologically, residues 25-236 are extracellular; it reads ATPLAKNLEP…GDSDSFFNSK (212 aa). The 135-residue stretch at 30–164 folds into the Ephrin RBD domain; sequence KNLEPVSWSS…TRTMKIVMKV (135 aa). Intrachain disulfides connect cysteine 64/cysteine 101 and cysteine 89/cysteine 153. Asparagine 139 carries an N-linked (GlcNAc...) asparagine glycan. The disordered stretch occupies residues 169–227; the sequence is NAVTPEQLTTSRPSKESDNTVKTATQAPGRGSQGDSDGKHETVNQEEKSGPGAGGGGSG. Over residues 204–217 the composition is skewed to basic and acidic residues; that stretch reads SDGKHETVNQEEKS. Residues 237-257 form a helical membrane-spanning segment; that stretch reads VALFAAVGAGCVIFLLIIIFL. At 258 to 345 the chain is on the cytoplasmic side; it reads TVLLLKLRKR…QSPANIYYKV (88 aa). The Nuclear localization signal signature appears at 259 to 272; the sequence is VLLLKLRKRHRKHT. The segment at 262 to 293 is interaction with ZHX2; that stretch reads LKLRKRHRKHTQQRAAALSLSTLASPKGGSGT. Phosphoserine occurs at positions 280 and 286. The PDZ-binding motif lies at 343-345; sequence YKV.

The protein belongs to the ephrin family. In terms of assembly, interacts (via PDZ-binding motif) with GRIP1 and GRIP2 (via PDZ domain 6). Interacts with TLE1. The intracellular domain peptide interacts with ZHX2; the interaction enhances ZHX2 transcriptional repression activity. Inducible phosphorylation of tyrosine residues in the cytoplasmic domain. Post-translationally, proteolytically processed. The ectodomain is cleaved, probably by a metalloprotease, to produce a membrane-tethered C-terminal fragment. This fragment is then further processed by the gamma-secretase complex to yield a soluble intracellular domain peptide which can translocate to the nucleus. The intracellular domain peptide is highly labile suggesting that it is targeted for degradation by the proteasome. As to expression, expressed on lateral floor plate cells, specifically on commissural axon segments that have passed through the floor plate. Expressed in cells of the retinal ganglion cell layer during retinal axon guidance to the optic disk. Expressed in myogenic progenitor cells.

The protein resides in the cell membrane. It localises to the membrane raft. It is found in the nucleus. In terms of biological role, cell surface transmembrane ligand for Eph receptors, a family of receptor tyrosine kinases which are crucial for migration, repulsion and adhesion during neuronal, vascular and epithelial development. Binding to Eph receptors residing on adjacent cells leads to contact-dependent bidirectional signaling into neighboring cells. Shows high affinity for the receptor tyrosine kinase EPHB1/ELK. Can also bind EPHB2 and EPHB3. Binds to, and induces the collapse of, commissural axons/growth cones in vitro. May play a role in constraining the orientation of longitudinally projecting axons. The sequence is that of Ephrin-B1 (Efnb1) from Mus musculus (Mouse).